A 222-amino-acid polypeptide reads, in one-letter code: PKHD-type hydroxylase P9301_13621 (222 aa).

The region spanning 81–175 is the Fe2OG dioxygenase domain; the sequence is KIHGIMFTKS…RLVCVGWIES (95 aa). His-99, Asp-101, and His-156 together coordinate Fe cation. A 2-oxoglutarate-binding site is contributed by Arg-166.

Fe(2+) serves as cofactor. Requires L-ascorbate as cofactor.

The polypeptide is PKHD-type hydroxylase P9301_13621 (Prochlorococcus marinus (strain MIT 9301)).